A 316-amino-acid polypeptide reads, in one-letter code: 4-hydroxy-3-methylbut-2-enyl diphosphate reductase (316 aa).

A [4Fe-4S] cluster-binding site is contributed by cysteine 12. Residues histidine 41 and histidine 74 each coordinate (2E)-4-hydroxy-3-methylbut-2-enyl diphosphate. Histidine 41 and histidine 74 together coordinate dimethylallyl diphosphate. Histidine 41 and histidine 74 together coordinate isopentenyl diphosphate. Cysteine 96 contributes to the [4Fe-4S] cluster binding site. Histidine 124 provides a ligand contact to (2E)-4-hydroxy-3-methylbut-2-enyl diphosphate. Histidine 124 is a dimethylallyl diphosphate binding site. Histidine 124 is an isopentenyl diphosphate binding site. Glutamate 126 (proton donor) is an active-site residue. Residue threonine 167 participates in (2E)-4-hydroxy-3-methylbut-2-enyl diphosphate binding. Position 197 (cysteine 197) interacts with [4Fe-4S] cluster. Residues serine 225, serine 226, asparagine 227, and serine 269 each coordinate (2E)-4-hydroxy-3-methylbut-2-enyl diphosphate. Dimethylallyl diphosphate is bound by residues serine 225, serine 226, asparagine 227, and serine 269. Residues serine 225, serine 226, asparagine 227, and serine 269 each coordinate isopentenyl diphosphate.

Belongs to the IspH family. As to quaternary structure, homodimer. It depends on [4Fe-4S] cluster as a cofactor.

It catalyses the reaction isopentenyl diphosphate + 2 oxidized [2Fe-2S]-[ferredoxin] + H2O = (2E)-4-hydroxy-3-methylbut-2-enyl diphosphate + 2 reduced [2Fe-2S]-[ferredoxin] + 2 H(+). It carries out the reaction dimethylallyl diphosphate + 2 oxidized [2Fe-2S]-[ferredoxin] + H2O = (2E)-4-hydroxy-3-methylbut-2-enyl diphosphate + 2 reduced [2Fe-2S]-[ferredoxin] + 2 H(+). It participates in isoprenoid biosynthesis; dimethylallyl diphosphate biosynthesis; dimethylallyl diphosphate from (2E)-4-hydroxy-3-methylbutenyl diphosphate: step 1/1. Its pathway is isoprenoid biosynthesis; isopentenyl diphosphate biosynthesis via DXP pathway; isopentenyl diphosphate from 1-deoxy-D-xylulose 5-phosphate: step 6/6. In terms of biological role, catalyzes the conversion of 1-hydroxy-2-methyl-2-(E)-butenyl 4-diphosphate (HMBPP) into a mixture of isopentenyl diphosphate (IPP) and dimethylallyl diphosphate (DMAPP). Acts in the terminal step of the DOXP/MEP pathway for isoprenoid precursor biosynthesis. This Shigella flexneri serotype 5b (strain 8401) protein is 4-hydroxy-3-methylbut-2-enyl diphosphate reductase.